Here is a 654-residue protein sequence, read N- to C-terminus: Probable protein phosphatase 2C 23 (654 aa).

The tract at residues 11-30 (CLTGGAGRNKKPELSILEPD) is disordered. The residue at position 147 (Ser147) is a Phosphoserine. The region spanning 243–645 (DVSLESQNLQ…DDVSIVVISL (403 aa)) is the PPM-type phosphatase domain. Mn(2+) contacts are provided by Asp280 and Gly281. The tract at residues 309-336 (DDPKTDAKSSDEADVENRDSSSEKKSKN) is disordered. Asp573 and Asp636 together coordinate Mn(2+).

Belongs to the PP2C family. Mg(2+) serves as cofactor. The cofactor is Mn(2+). In terms of tissue distribution, expressed in seedlings, roots, leaves, stems, young inflorescences, flowers and siliques.

The protein localises to the nucleus. The enzyme catalyses O-phospho-L-seryl-[protein] + H2O = L-seryl-[protein] + phosphate. The catalysed reaction is O-phospho-L-threonyl-[protein] + H2O = L-threonyl-[protein] + phosphate. In terms of biological role, involved in leaf development regulation. In Arabidopsis thaliana (Mouse-ear cress), this protein is Probable protein phosphatase 2C 23 (PLL4).